A 788-amino-acid polypeptide reads, in one-letter code: E3 ubiquitin-protein ligase SspH2 (788 aa).

An interaction with host membrane and with target proteins region spans residues methionine 1–phenylalanine 481. LRR repeat units lie at residues histidine 223–proline 242, glutamate 243–leucine 264, leucine 265–serine 282, glycine 283–proline 302, glycine 303–leucine 324, cysteine 325–serine 342, glycine 343–leucine 364, tyrosine 365–serine 382, glycine 383–leucine 404, lysine 405–serine 422, glycine 423–serine 445, and serine 446–arginine 466. The interval aspartate 482–glutamate 491 is linker. Positions threonine 492–asparagine 788 are E3 ubiquitin-protein ligase catalytic domain. Residues alanine 494–asparagine 788 enclose the NEL domain. The active-site Glycyl thioester intermediate is the cysteine 580.

This sequence belongs to the LRR-containing bacterial E3 ligase family. In terms of processing, ubiquitinated in the presence of host E1 ubiquitin-activating enzyme UBA1, E2 ubiquitin-conjugating enzyme UBE2D2 and ubiquitin.

It is found in the secreted. It localises to the host cytoplasm. The protein resides in the host apical cell membrane. It carries out the reaction S-ubiquitinyl-[E2 ubiquitin-conjugating enzyme]-L-cysteine + [acceptor protein]-L-lysine = [E2 ubiquitin-conjugating enzyme]-L-cysteine + N(6)-ubiquitinyl-[acceptor protein]-L-lysine.. Its activity is regulated as follows. Exists in an autoinhibited state in the absence of substrate protein, due to interactions of the leucine-rich repeat domain with the catalytic domain. Is activated upon binding to a substrate protein. Its function is as follows. Effector proteins function to alter host cell physiology and promote bacterial survival in host tissues. This protein is an E3 ubiquitin ligase that interferes with host's ubiquitination pathway. The polypeptide is E3 ubiquitin-protein ligase SspH2 (sspH2) (Salmonella typhimurium (strain LT2 / SGSC1412 / ATCC 700720)).